A 93-amino-acid polypeptide reads, in one-letter code: Large ribosomal subunit protein uL23cz/uL23cy (93 aa).

It belongs to the universal ribosomal protein uL23 family. Part of the 50S ribosomal subunit.

The protein localises to the plastid. It localises to the chloroplast. Binds to 23S rRNA. This is Large ribosomal subunit protein uL23cz/uL23cy (rpl23-A) from Oenothera elata subsp. hookeri (Hooker's evening primrose).